Reading from the N-terminus, the 592-residue chain is LPEKRINVGKKHLQTLRNLETRCHDSFQAFVVIDARSSSTRTNVFLAKTRSCPNRGRSIDPDSIRLIREGKRFTGLRVVLEEWLDTYAGKDWESRPVDARLLFQYVPQMHEGAKKPMQLLEEDTVAILDSQLNEKQKVQVKALGIPAMLCSTAGVRDFHEWYRDALFVLLRHLINNPSPAHGYKFFTNPFWTRPITGAEEGLFAFITLNHLSRRLGEDPARCMIDEYGVKQCRNDLAGVVEVGGASAQIVFPLQEGTVLPSSVRAVNLQRERLLPERYPSADVVSVSFMQLGMASSAGLFLKELCSNDEFLQGGICSNPCLFKGFQQSCSAGEVEVRPDGSASVNEDVRKNRLKPLATYCSVNNPEISFKVTNEMQCRENSIDPTKPLAERMKIENCSIIKGTGNFDKCVSQVESILVAPKLPLPANIEAASSGFESVDQVFRFASSTAPMIVTGGGMLAAINTLKDHRLLRSDFSGDVEELAEAAREFCSSEVIIRTDGPVIQLPNARGEQKLNSLNFDLCKTMALTVSLLRHMAAGENQPSFIKWEKSIAGPDGKPLADLGWQVGVILHHVLFTEEWGRNAYEAGYSHNL.

The Proton acceptor role is filled by E200.

This sequence belongs to the GDA1/CD39 NTPase family.

The enzyme catalyses a ribonucleoside 5'-triphosphate + H2O = a ribonucleoside 5'-diphosphate + phosphate + H(+). The polypeptide is Putative nucleoside-triphosphatase (NTP4) (Toxoplasma gondii).